Consider the following 396-residue polypeptide: NASP-related protein sim3 (396 aa).

The segment at 1-31 (MSSDTKTLENSKGNSATDADTKNPSSSDSRA) is disordered. TPR repeat units follow at residues 32 to 65 (IEQL…SESI) and 89 to 122 (IENS…GSFT). The segment at 135-164 (NEENSSIAHPEKESEEKETNEASPASEEDE) is disordered. Basic and acidic residues predominate over residues 143–154 (HPEKESEEKETN). Residues 199–232 (ADIYDLLGELSLEIENFSQASQDLKTALEWKEKV) form a TPR 3 repeat. Positions 267 to 329 (CEHVEKAAEI…QKTLDLKHGA (63 aa)) form a coiled coil. The span at 284–301 (RENEVTDKKGKGKQKAEE) shows a compositional bias: basic and acidic residues. Disordered stretches follow at residues 284–307 (RENE…LTSD) and 334–396 (EAVM…KKKD). Residues 343-353 (SSLLSKDSSSL) show a composition bias toward low complexity.

This sequence belongs to the NASP family. Interacts with cnp1, hht1, hht2 and hht3; has a preference for CENP-A (cnp1) over histone H3 (hht1/2/3).

Its subcellular location is the nucleus. Histone H3 and H3-like CENP-A-specific chaperone. Promotes delivery and incorporation of CENP-A in centromeric chromatin, probably by escorting nascent CENP-A to CENP-A chromatin assembly factors. Required for central core silencing and normal chromosome segregation. The protein is NASP-related protein sim3 (sim3) of Schizosaccharomyces pombe (strain 972 / ATCC 24843) (Fission yeast).